The chain runs to 141 residues: Hemoglobin subunit alpha (141 aa).

The Globin domain occupies 1 to 141 (VLSANDKTNV…VSTVLTSKYR (141 aa)). Residue S3 is modified to Phosphoserine. An N6-succinyllysine modification is found at K7. At T8 the chain carries Phosphothreonine. K11 is subject to N6-succinyllysine. K16 carries the N6-acetyllysine; alternate modification. Residue K16 is modified to N6-succinyllysine; alternate. Residue Y24 is modified to Phosphotyrosine. The residue at position 35 (S35) is a Phosphoserine. N6-succinyllysine is present on K40. Residue S49 is modified to Phosphoserine. Q58 serves as a coordination point for O2. H87 serves as a coordination point for heme b. The residue at position 108 (T108) is a Phosphothreonine. Phosphoserine occurs at positions 124 and 131. A phosphothreonine mark is found at T134 and T137. S138 bears the Phosphoserine mark.

This sequence belongs to the globin family. In terms of assembly, heterotetramer of two alpha chains and two beta chains. As to expression, red blood cells.

Its function is as follows. Involved in oxygen transport from the lung to the various peripheral tissues. Functionally, hemopressin acts as an antagonist peptide of the cannabinoid receptor CNR1. Hemopressin-binding efficiently blocks cannabinoid receptor CNR1 and subsequent signaling. The polypeptide is Hemoglobin subunit alpha (HBA) (Didelphis virginiana (North American opossum)).